The chain runs to 211 residues: Superoxide dismutase [Fe] (211 aa).

Histidine 31, histidine 79, aspartate 165, and histidine 169 together coordinate Fe cation.

This sequence belongs to the iron/manganese superoxide dismutase family. As to quaternary structure, homotetramer. It depends on Fe cation as a cofactor.

The catalysed reaction is 2 superoxide + 2 H(+) = H2O2 + O2. Destroys superoxide anion radicals which are normally produced within the cells and which are toxic to biological systems. The chain is Superoxide dismutase [Fe] (sod) from Pyrobaculum aerophilum (strain ATCC 51768 / DSM 7523 / JCM 9630 / CIP 104966 / NBRC 100827 / IM2).